Reading from the N-terminus, the 264-residue chain is Proliferating cell nuclear antigen 2 (264 aa).

The DNA-binding element occupies 61-80 (RCDRNLSMGMNLGNMSKMLK).

The protein belongs to the PCNA family. Homo- and heterotrimer. Interacts with POLH, ATXR5 and ATXR6.

Its subcellular location is the nucleus. This protein is an auxiliary protein of DNA polymerase delta and is involved in the control of eukaryotic DNA replication by increasing the polymerase's processibility during elongation of the leading strand. May be involved in UV resistance. This is Proliferating cell nuclear antigen 2 (PCNA2) from Arabidopsis thaliana (Mouse-ear cress).